Reading from the N-terminus, the 214-residue chain is Ribosomal RNA small subunit methyltransferase G (214 aa).

S-adenosyl-L-methionine is bound by residues glycine 78, leucine 83, 129–130 (AE), and arginine 144.

The protein belongs to the methyltransferase superfamily. RNA methyltransferase RsmG family.

The protein localises to the cytoplasm. It catalyses the reaction guanosine(527) in 16S rRNA + S-adenosyl-L-methionine = N(7)-methylguanosine(527) in 16S rRNA + S-adenosyl-L-homocysteine. In terms of biological role, specifically methylates the N7 position of guanine in position 527 of 16S rRNA. This is Ribosomal RNA small subunit methyltransferase G from Marinobacter nauticus (strain ATCC 700491 / DSM 11845 / VT8) (Marinobacter aquaeolei).